Here is a 177-residue protein sequence, read N- to C-terminus: Ribonuclease M5 (177 aa).

A Toprim domain is found at 5–99 (KQIIIVEGKT…NKTSKKIGIA (95 aa)). Mg(2+) contacts are provided by Glu11, Asp59, and Asp61.

The protein belongs to the ribonuclease M5 family. It depends on Mg(2+) as a cofactor.

It localises to the cytoplasm. It catalyses the reaction Endonucleolytic cleavage of RNA, removing 21 and 42 nucleotides, respectively, from the 5'- and 3'-termini of a 5S-rRNA precursor.. Required for correct processing of both the 5' and 3' ends of 5S rRNA precursor. Cleaves both sides of a double-stranded region yielding mature 5S rRNA in one step. The protein is Ribonuclease M5 of Mycoplasma mycoides subsp. mycoides SC (strain CCUG 32753 / NCTC 10114 / PG1).